The primary structure comprises 305 residues: Methionyl-tRNA formyltransferase (305 aa).

111 to 114 serves as a coordination point for (6S)-5,6,7,8-tetrahydrofolate; it reads SLLP.

It belongs to the Fmt family.

It catalyses the reaction L-methionyl-tRNA(fMet) + (6R)-10-formyltetrahydrofolate = N-formyl-L-methionyl-tRNA(fMet) + (6S)-5,6,7,8-tetrahydrofolate + H(+). In terms of biological role, attaches a formyl group to the free amino group of methionyl-tRNA(fMet). The formyl group appears to play a dual role in the initiator identity of N-formylmethionyl-tRNA by promoting its recognition by IF2 and preventing the misappropriation of this tRNA by the elongation apparatus. The protein is Methionyl-tRNA formyltransferase of Campylobacter jejuni subsp. jejuni serotype O:23/36 (strain 81-176).